The primary structure comprises 534 residues: Acyl-CoA-binding domain-containing protein 5 (534 aa).

The ACB domain maps to 41-130 (HETRFEAAVK…MKKIIETMPM (90 aa)). 52 to 61 (IQSLPKNGSF) lines the an acyl-CoA pocket. At Pro-63 the chain carries Phosphothreonine. An acyl-CoA-binding positions include 72 to 76 (YSFYK), Lys-98, and Tyr-117. Phosphothreonine is present on residues Leu-137 and Glu-172. Positions 181–225 (TPNAKTVNGKAESSDSGAESEEEEAQEEVKGAEQSDNDKKMMKKS) are disordered. Residues 190–219 (KAESSDSGAESEEEEAQEEVKGAEQSDNDK) are a coiled coil. 7 positions are modified to phosphoserine: Ser-193, Ser-194, Ser-196, Ser-200, Ser-215, Ser-279, and Ser-313. Basic and acidic residues predominate over residues 207 to 225 (EEVKGAEQSDNDKKMMKKS). Over residues 376–385 (EVKHGGEDGR) the composition is skewed to basic and acidic residues. A disordered region spans residues 376–442 (EVKHGGEDGR…ERWGSDRGSR (67 aa)). Thr-400 bears the Phosphothreonine mark. Ser-428 is subject to Phosphoserine. The segment covering 431 to 441 (DGERWGSDRGS) has biased composition (basic and acidic residues). The stretch at 447-476 (EQIALVLMRLQEDMQNVLQRLQKLETLTAL) forms a coiled coil. Lys-469 carries the N6-acetyllysine modification. A helical membrane pass occupies residues 506 to 526 (GVLTFAIIWPFIAQWLVYLYY).

Belongs to the ATG37 family.

Its subcellular location is the peroxisome membrane. In terms of biological role, acyl-CoA binding protein which acts as the peroxisome receptor for pexophagy but is dispensable for aggrephagy and nonselective autophagy. Binds medium- and long-chain acyl-CoA esters. The protein is Acyl-CoA-binding domain-containing protein 5 (ACBD5) of Homo sapiens (Human).